The sequence spans 611 residues: Leukotriene A-4 hydrolase (611 aa).

Residue lysine 73 is modified to N6-acetyllysine. Residues glutamine 135–glutamine 137 and proline 267–glutamate 272 each bind a peptide. Residue histidine 296 coordinates Zn(2+). The Proton acceptor role is filled by glutamate 297. Histidine 300 and glutamate 319 together coordinate Zn(2+). Lysine 337 carries the post-translational modification N6-acetyllysine. Tyrosine 384 serves as the catalytic Proton donor. An N6-acetyllysine modification is found at lysine 414. Phosphoserine is present on serine 416. Arginine 564–lysine 566 contacts a peptide. An N6-acetyllysine modification is found at lysine 573.

Belongs to the peptidase M1 family. In terms of assembly, monomer. It depends on Zn(2+) as a cofactor. In terms of processing, phosphorylation at Ser-416 inhibits leukotriene-A4 hydrolase activity. Isoform 1 and isoform 2 are expressed in monocytes, lymphocytes, neutrophils, reticulocytes, platelets and fibroblasts.

The protein localises to the cytoplasm. It carries out the reaction leukotriene A4 + H2O = leukotriene B4. The catalysed reaction is (5S,6S)-epoxy-(18R)-hydroxy-(7E,9E,11Z,14Z,16E)-eicosapentaenoate + H2O = resolvin E1. The enzyme catalyses (5S,6S)-epoxy-(18S)-hydroxy-(7E,9E,11Z,14Z,16E)-eicosapentaenoate + H2O = 18S-resolvin E1. It catalyses the reaction Release of the N-terminal residue from a tripeptide.. Its pathway is lipid metabolism; leukotriene B4 biosynthesis. With respect to regulation, inhibited by bestatin. The epoxide hydrolase activity is restrained by suicide inactivation that involves binding of LTA4 to Tyr-379. 4-(4-benzylphenyl)thiazol-2-amine (ARM1) selectively inhibits the epoxide hydrolase activity. Bifunctional zinc metalloenzyme that comprises both epoxide hydrolase (EH) and aminopeptidase activities. Acts as an epoxide hydrolase to catalyze the conversion of LTA4 to the pro-inflammatory mediator leukotriene B4 (LTB4). Also has aminopeptidase activity, with high affinity for N-terminal arginines of various synthetic tripeptides. In addition to its pro-inflammatory EH activity, may also counteract inflammation by its aminopeptidase activity, which inactivates by cleavage another neutrophil attractant, the tripeptide Pro-Gly-Pro (PGP), a bioactive fragment of collagen generated by the action of matrix metalloproteinase-9 (MMP9) and prolylendopeptidase (PREPL). Involved also in the biosynthesis of resolvin E1 and 18S-resolvin E1 from eicosapentaenoic acid, two lipid mediators that show potent anti-inflammatory and pro-resolving actions. This chain is Leukotriene A-4 hydrolase (LTA4H), found in Homo sapiens (Human).